A 739-amino-acid polypeptide reads, in one-letter code: Adhesion G protein-coupled receptor L4 (739 aa).

The first 19 residues, 1-19 (MRLLPLLVGFSTLLNCSYT), serve as a signal peptide directing secretion. Residues 20 to 57 (QNCSKTTCLPNAKCEVHNGVEACFCSQGYSGNGVTICE) form the EGF-like 1 domain. Over 20 to 481 (QNCSKTTCLP…DYNILTRITQ (462 aa)) the chain is Extracellular. Asn21 is a glycosylation site (N-linked (GlcNAc...) asparagine). Cystine bridges form between Cys22–Cys33, Cys27–Cys42, Cys44–Cys56, Cys62–Cys74, Cys68–Cys83, Cys85–Cys106, Cys112–Cys124, Cys118–Cys133, and Cys135–Cys156. In terms of domain architecture, EGF-like 2; calcium-binding spans 58–107 (DIDECSESSVCGDHAVCENVNGGFSCFCREGYQTATGKSQFTPNDGSYCQ). The 50-residue stretch at 108-157 (DIDECSESSVCGDHAVCENVNGGFSCFCREGYQTATGKSQFTPNDGSYCQ) folds into the EGF-like 3; calcium-binding domain. Residues Asn176, Asn226, Asn237, Asn298, Asn422, Asn430, and Asn444 are each glycosylated (N-linked (GlcNAc...) asparagine). Positions 293–468 (SQFDMNSTDL…AILMSSTSSI (176 aa)) constitute a GAIN-B domain. Cystine bridges form between Cys418–Cys450 and Cys438–Cys452. Residues 418-468 (CAFWNYSVDAMNNGSWSTEGCELTHSNDTHTSCRCSHLTHFAILMSSTSSI) form a GPS region. The helical transmembrane segment at 482-502 (LGIIISLICLAICIFTFWFFS) threads the bilayer. Over 503–513 (EIQSTRTTIHK) the chain is Cytoplasmic. The helical transmembrane segment at 514–534 (NLCCSLFLAELVFLIGININT) threads the bilayer. Over 535–548 (NKLVCSIIAGLLHY) the chain is Extracellular. Residues 549 to 569 (FFLAAFAWMCIEGIHLYLIVV) traverse the membrane as a helical segment. Residues 570 to 581 (GVIYNKGFLHKN) lie on the Cytoplasmic side of the membrane. A helical membrane pass occupies residues 582–602 (FYIFGYLSPAVVVGFSASLGY). Residues 603–622 (RYYGTTKVCWLSTENNFIWS) lie on the Extracellular side of the membrane. A helical transmembrane segment spans residues 623–643 (FIGPACLIILVNLLAFGVIIY). Residues 644 to 667 (KVFRHTAGLKPEVSCYENIRSCAR) are Cytoplasmic-facing. A helical transmembrane segment spans residues 668-688 (GALALLFLLGTTWIFGVLHVV). At 689-695 (HASVVTA) the chain is on the extracellular side. A helical transmembrane segment spans residues 696–716 (YLFTVSNAFQGMFIFLFLCVL). At 717–739 (SRKIQEEYYRLFKNVPCCFGCLR) the chain is on the cytoplasmic side.

Belongs to the G-protein coupled receptor 2 family. Adhesion G-protein coupled receptor (ADGR) subfamily. In terms of assembly, heterodimer of 2 chains generated by proteolytic processing; the large extracellular N-terminal fragment and the membrane-bound C-terminal fragment predominantly remain associated and non-covalently linked. Glycosylated. In terms of processing, proteolytically cleaved into 2 subunits, an extracellular alpha subunit and a seven-transmembrane subunit.

The protein localises to the cell membrane. In terms of biological role, endothelial orphan receptor that acts as a key regulator of angiogenesis. This chain is Adhesion G protein-coupled receptor L4 (Adgrl4), found in Mus musculus (Mouse).